Here is a 154-residue protein sequence, read N- to C-terminus: Endoribonuclease YbeY (154 aa).

Histidine 117, histidine 121, and histidine 127 together coordinate Zn(2+).

Belongs to the endoribonuclease YbeY family. The cofactor is Zn(2+).

The protein resides in the cytoplasm. Its function is as follows. Single strand-specific metallo-endoribonuclease involved in late-stage 70S ribosome quality control and in maturation of the 3' terminus of the 16S rRNA. The protein is Endoribonuclease YbeY of Aromatoleum aromaticum (strain DSM 19018 / LMG 30748 / EbN1) (Azoarcus sp. (strain EbN1)).